Consider the following 222-residue polypeptide: Uracil-DNA glycosylase (222 aa).

D66 serves as the catalytic Proton acceptor.

The protein belongs to the uracil-DNA glycosylase (UDG) superfamily. UNG family.

It localises to the cytoplasm. The catalysed reaction is Hydrolyzes single-stranded DNA or mismatched double-stranded DNA and polynucleotides, releasing free uracil.. Excises uracil residues from the DNA which can arise as a result of misincorporation of dUMP residues by DNA polymerase or due to deamination of cytosine. This Porphyromonas gingivalis (strain ATCC 33277 / DSM 20709 / CIP 103683 / JCM 12257 / NCTC 11834 / 2561) protein is Uracil-DNA glycosylase.